A 157-amino-acid chain; its full sequence is Crossover junction endodeoxyribonuclease RuvC (157 aa).

Active-site residues include Asp-7, Glu-66, and Asp-139. 3 residues coordinate Mg(2+): Asp-7, Glu-66, and Asp-139.

This sequence belongs to the RuvC family. Homodimer which binds Holliday junction (HJ) DNA. The HJ becomes 2-fold symmetrical on binding to RuvC with unstacked arms; it has a different conformation from HJ DNA in complex with RuvA. In the full resolvosome a probable DNA-RuvA(4)-RuvB(12)-RuvC(2) complex forms which resolves the HJ. The cofactor is Mg(2+).

It is found in the cytoplasm. The catalysed reaction is Endonucleolytic cleavage at a junction such as a reciprocal single-stranded crossover between two homologous DNA duplexes (Holliday junction).. In terms of biological role, the RuvA-RuvB-RuvC complex processes Holliday junction (HJ) DNA during genetic recombination and DNA repair. Endonuclease that resolves HJ intermediates. Cleaves cruciform DNA by making single-stranded nicks across the HJ at symmetrical positions within the homologous arms, yielding a 5'-phosphate and a 3'-hydroxyl group; requires a central core of homology in the junction. The consensus cleavage sequence is 5'-(A/T)TT(C/G)-3'. Cleavage occurs on the 3'-side of the TT dinucleotide at the point of strand exchange. HJ branch migration catalyzed by RuvA-RuvB allows RuvC to scan DNA until it finds its consensus sequence, where it cleaves and resolves the cruciform DNA. The polypeptide is Crossover junction endodeoxyribonuclease RuvC (Helicobacter pylori (strain P12)).